The sequence spans 498 residues: Glycerol kinase (498 aa).

Thr12 contributes to the ADP binding site. Positions 12, 13, and 14 each coordinate ATP. Thr12 is a sn-glycerol 3-phosphate binding site. Arg16 contacts ADP. 4 residues coordinate sn-glycerol 3-phosphate: Arg82, Glu83, Tyr134, and Asp244. Arg82, Glu83, Tyr134, Asp244, and Gln245 together coordinate glycerol. Residues Thr266 and Gly310 each coordinate ADP. Residues Thr266, Gly310, Gln314, and Gly411 each contribute to the ATP site. ADP-binding residues include Gly411 and Asn415.

Belongs to the FGGY kinase family.

The enzyme catalyses glycerol + ATP = sn-glycerol 3-phosphate + ADP + H(+). Its pathway is polyol metabolism; glycerol degradation via glycerol kinase pathway; sn-glycerol 3-phosphate from glycerol: step 1/1. With respect to regulation, inhibited by fructose 1,6-bisphosphate (FBP). Functionally, key enzyme in the regulation of glycerol uptake and metabolism. Catalyzes the phosphorylation of glycerol to yield sn-glycerol 3-phosphate. This chain is Glycerol kinase, found in Roseiflexus sp. (strain RS-1).